A 338-amino-acid chain; its full sequence is Ketol-acid reductoisomerase (NADP(+)) (338 aa).

In terms of domain architecture, KARI N-terminal Rossmann spans 1–181 (MQVYYDKDAD…GGGRAGVIET (181 aa)). NADP(+)-binding positions include 24 to 27 (YGSQ), Arg-47, Ser-50, Ser-52, and 82 to 85 (DEHQ). His-107 is an active-site residue. Gly-133 is an NADP(+) binding site. Residues 182 to 327 (SFREETETDL…ERLRGMMPWI (146 aa)) form the KARI C-terminal knotted domain. Mg(2+) is bound by residues Asp-190, Glu-194, Glu-226, and Glu-230. Ser-251 contributes to the substrate binding site.

This sequence belongs to the ketol-acid reductoisomerase family. It depends on Mg(2+) as a cofactor.

The catalysed reaction is (2R)-2,3-dihydroxy-3-methylbutanoate + NADP(+) = (2S)-2-acetolactate + NADPH + H(+). The enzyme catalyses (2R,3R)-2,3-dihydroxy-3-methylpentanoate + NADP(+) = (S)-2-ethyl-2-hydroxy-3-oxobutanoate + NADPH + H(+). Its pathway is amino-acid biosynthesis; L-isoleucine biosynthesis; L-isoleucine from 2-oxobutanoate: step 2/4. It functions in the pathway amino-acid biosynthesis; L-valine biosynthesis; L-valine from pyruvate: step 2/4. In terms of biological role, involved in the biosynthesis of branched-chain amino acids (BCAA). Catalyzes an alkyl-migration followed by a ketol-acid reduction of (S)-2-acetolactate (S2AL) to yield (R)-2,3-dihydroxy-isovalerate. In the isomerase reaction, S2AL is rearranged via a Mg-dependent methyl migration to produce 3-hydroxy-3-methyl-2-ketobutyrate (HMKB). In the reductase reaction, this 2-ketoacid undergoes a metal-dependent reduction by NADPH to yield (R)-2,3-dihydroxy-isovalerate. In Alkalilimnicola ehrlichii (strain ATCC BAA-1101 / DSM 17681 / MLHE-1), this protein is Ketol-acid reductoisomerase (NADP(+)).